Reading from the N-terminus, the 484-residue chain is Fork head protein homolog 1 (484 aa).

Residues 76–142 (VTIGRNTDSL…NGAKVNFRRI (67 aa)) form the FHA domain. A DNA-binding region (fork-head) is located at residues 302 to 393 (IKPPQSYASM…RRDFLNKWNA (92 aa)).

As to quaternary structure, interacts (via FHA domain) with ECM30, GLN3, URE2, MPH1 AND FDO1. Interacts with the origin recognition complex (ORC) composed of ORC1 to ORC6.

It localises to the nucleus. The protein localises to the cytoplasm. The protein resides in the cytosol. Its function is as follows. Transcription factor that regulates the expression of the CLB2 cluster of genes during the G2/M phase of the mitotic cell cycle. The CLB2 cluster of genes includes mitotic regulators such as CLB1, CLB2, CDC5 and CDC20 as well as SWI5 and ACE2, transcription factors required for the subsequent temporal wave of cell cycle regulated gene expression in the M/G1 phase interval. Involved in HMRa silencing. FKH1 and FKH2 associate with the coding regions of active genes and influence, in opposing ways, transcriptional elongation and termination, and coordinate early transcription elongation and pre-mRNA processing. Both FKH1 and FKH2 play a role as regulators of lifespan in collaboration with the anaphase-promoting complex (APC), likely through combined regulation of stress response, genomic stability, and cell cycle regulation. FKH1 and FKH2 function also in controlling yeast cell morphology by preventing preudohyphal growth. Acts as a rate-limiting replication origin activator via its interaction with the origin recognition complex (ORC). Plays a transcription-independent role in recombination donor preference during mating-type switching through binding to the recombination enhancer (RE), a 700-bp cis-acting element that controls recombination along the left arm of chromosome III. This Saccharomyces cerevisiae (strain ATCC 204508 / S288c) (Baker's yeast) protein is Fork head protein homolog 1.